A 270-amino-acid polypeptide reads, in one-letter code: Transcription factor PU.1 (270 aa).

The interval 123-164 (SLSPAQPSSDEEEGERQSPPLEVSDGEADGLEPGPGLLPGET) is disordered. 2 positions are modified to phosphoserine: Ser-140 and Ser-146. Over residues 153–164 (LEPGPGLLPGET) the composition is skewed to low complexity. A DNA-binding region (ETS) is located at residues 170–253 (IRLYQFLLDL…VKKKLTYQFS (84 aa)). 4 residues coordinate DNA: Lys-217, Arg-230, Arg-233, and Lys-243.

Belongs to the ETS family. Binds DNA as a monomer. Can form homomers. Directly interacts with CEBPD/NF-IL6-beta; this interaction does not affect DNA-binding properties of each partner. Interacts with NONO/p54(nrb). Interacts with RUNX1/AML1. Interacts with GFI1; the interaction represses SPI1 transcriptional activity, hence blocks SPI1-induced macrophage differentiation of myeloid progenitor cells. Interacts with CEBPE. Interacts with IRF4/Pip and IRF8. Interacts with JUN. Interacts with RB1. Interacts with TBP. As to expression, in the bone marrow, concentrated in hematopoietic stem cell, lymphoid progenitor, myeloid lineage (granulocyte macrophage progenitors, classical dendritic cells, monocytes) and B-cell clusters. Among B-cells, predominantly expressed in pre-B1 cells. Expressed in germinal center B-cells.

The protein resides in the nucleus. With respect to regulation, transcriptional activity at macrophage-specific genes is inhibited by interaction with GFI1, which results in the inhibition of SPI1-induced macrophage differentiation of myeloid progenitor cells, but not that of the granulocyte lineage. Pioneer transcription factor, which controls hematopoietic cell fate by decompacting stem cell heterochromatin and allowing other transcription factors to enter otherwise inaccessible genomic sites. Once in open chromatin, can directly control gene expression by binding genetic regulatory elements and can also more broadly influence transcription by recruiting transcription factors, such as interferon regulatory factors (IRFs), to otherwise inaccessible genomic regions. Transcriptionally activates genes important for myeloid and lymphoid lineages, such as CSF1R. Transcriptional activation from certain promoters, possibly containing low affinity binding sites, is achieved cooperatively with other transcription factors. FCER1A transactivation is achieved in cooperation with GATA1. May be particularly important for the pro- to pre-B cell transition. Binds (via the ETS domain) onto the purine-rich DNA core sequence 5'-GAGGAA-3', also known as the PU-box. In vitro can bind RNA and interfere with pre-mRNA splicing. In Homo sapiens (Human), this protein is Transcription factor PU.1 (SPI1).